Here is a 164-residue protein sequence, read N- to C-terminus: Ferredoxin-type protein NapF (164 aa).

3 4Fe-4S ferredoxin-type domains span residues 28–57 (GDES…RGAG), 58–89 (GYPS…PRHT), and 132–161 (YQPQ…AEYL). Residues Cys37, Cys40, Cys43, Cys47, Cys69, Cys72, Cys75, Cys79, Cys141, Cys144, Cys147, and Cys151 each coordinate [4Fe-4S] cluster.

This sequence belongs to the NapF family. Interacts with the cytoplasmic NapA precursor. The cofactor is [4Fe-4S] cluster.

It is found in the cytoplasm. Could be involved in the maturation of NapA, the catalytic subunit of the periplasmic nitrate reductase, before its export into the periplasm. The chain is Ferredoxin-type protein NapF from Escherichia coli O157:H7.